The chain runs to 310 residues: tRNA dimethylallyltransferase (310 aa).

9–16 lines the ATP pocket; that stretch reads GPTAVGKT. 11 to 16 contributes to the substrate binding site; sequence TAVGKT. Residues 34 to 37 form an interaction with substrate tRNA region; the sequence is DSMQ.

It belongs to the IPP transferase family. As to quaternary structure, monomer. It depends on Mg(2+) as a cofactor.

The catalysed reaction is adenosine(37) in tRNA + dimethylallyl diphosphate = N(6)-dimethylallyladenosine(37) in tRNA + diphosphate. In terms of biological role, catalyzes the transfer of a dimethylallyl group onto the adenine at position 37 in tRNAs that read codons beginning with uridine, leading to the formation of N6-(dimethylallyl)adenosine (i(6)A). This is tRNA dimethylallyltransferase from Syntrophomonas wolfei subsp. wolfei (strain DSM 2245B / Goettingen).